We begin with the raw amino-acid sequence, 310 residues long: 26S proteasome non-ATPase regulatory subunit 14 (310 aa).

The 136-residue stretch at Val-31–Asn-166 folds into the MPN domain. Zn(2+)-binding residues include His-113, His-115, and Asp-126. The JAMM motif signature appears at His-113–Asp-126. A phosphoserine mark is found at Ser-150 and Ser-224. Thr-266 carries the phosphothreonine modification.

This sequence belongs to the peptidase M67A family. PSMD14 subfamily. In terms of assembly, component of the 19S proteasome regulatory particle complex. The 26S proteasome consists of a 20S core particle (CP) and two 19S regulatory subunits (RP). The regulatory particle is made of a lid composed of 9 subunits including PSMD4, a base containing 6 ATPases and few additional components. Within the complex, PSMD4 interacts with subunit PSMD7 through their respective MPN domain. Interacts with TXNL1. As to expression, widely expressed. Highest levels in heart and skeletal muscle.

Its function is as follows. Component of the 26S proteasome, a multiprotein complex involved in the ATP-dependent degradation of ubiquitinated proteins. This complex plays a key role in the maintenance of protein homeostasis by removing misfolded or damaged proteins, which could impair cellular functions, and by removing proteins whose functions are no longer required. Therefore, the proteasome participates in numerous cellular processes, including cell cycle progression, apoptosis, or DNA damage repair. The PSMD14 subunit is a metalloprotease that specifically cleaves 'Lys-63'-linked polyubiquitin chains within the complex. Plays a role in response to double-strand breaks (DSBs): acts as a regulator of non-homologous end joining (NHEJ) by cleaving 'Lys-63'-linked polyubiquitin, thereby promoting retention of JMJD2A/KDM4A on chromatin and restricting TP53BP1 accumulation. Also involved in homologous recombination repair by promoting RAD51 loading. The chain is 26S proteasome non-ATPase regulatory subunit 14 (PSMD14) from Homo sapiens (Human).